Consider the following 266-residue polypeptide: Glucosamine-6-phosphate deaminase (266 aa).

Asp72 (proton acceptor; for enolization step) is an active-site residue. Asp141 functions as the For ring-opening step in the catalytic mechanism. His143 acts as the Proton acceptor; for ring-opening step in catalysis. Glu148 serves as the catalytic For ring-opening step.

Belongs to the glucosamine/galactosamine-6-phosphate isomerase family. NagB subfamily. In terms of assembly, homohexamer.

The enzyme catalyses alpha-D-glucosamine 6-phosphate + H2O = beta-D-fructose 6-phosphate + NH4(+). It participates in amino-sugar metabolism; N-acetylneuraminate degradation; D-fructose 6-phosphate from N-acetylneuraminate: step 5/5. Its activity is regulated as follows. Allosterically activated by N-acetylglucosamine 6-phosphate (GlcNAc6P). Its function is as follows. Catalyzes the reversible isomerization-deamination of glucosamine 6-phosphate (GlcN6P) to form fructose 6-phosphate (Fru6P) and ammonium ion. This is Glucosamine-6-phosphate deaminase from Pectobacterium carotovorum subsp. carotovorum (strain PC1).